The chain runs to 352 residues: E3 ubiquitin-protein ligase RNF146 (352 aa).

The RING-type zinc finger occupies 36–74; sequence CAICLQTCVHPVSLPCKHVFCYLCVKGASWLGKRCALCR. Glycyl lysine isopeptide (Lys-Gly) (interchain with G-Cter in ubiquitin) cross-links involve residues Lys84 and Lys94. One can recognise a WWE domain in the interval 91 to 167; that stretch reads EELKAASRGN…EHGRRRKIKR (77 aa). Tyr107, Arg110, and Trp114 together coordinate a glycoprotein. Residue Lys130 forms a Glycyl lysine isopeptide (Lys-Gly) (interchain with G-Cter in ubiquitin) linkage. 4 residues coordinate a glycoprotein: Tyr144, Gln153, Arg163, and Lys175. Lys175 is covalently cross-linked (Glycyl lysine isopeptide (Lys-Gly) (interchain with G-Cter in ubiquitin)). Disordered stretches follow at residues 195–242, 259–293, and 317–352; these read SSAD…AGAS, ERSH…ASSD, and NQTV…VTEV. The span at 197–210 shows a compositional bias: low complexity; that stretch reads ADGADSGSAHTGAS. The segment covering 215–233 has biased composition (polar residues); the sequence is VPSSTRPLTSVDGQLTSPV. The span at 282 to 293 shows a compositional bias: acidic residues; that stretch reads STEETESDASSD. 2 positions are modified to phosphoserine: Ser288 and Ser292.

In terms of assembly, can form homooligomers. Interacts with PARsylated AXIN1, AXIN2, BLZF1, CASC3, H1-2, IPO7, LIG3, NCL, PARP1, XRCC1, XRCC5 and XRCC6. Interacts with DDB1, DHX15, IQGAP1, LRPPRC, PARP2, PRKDC, RUVBL2, TNKS1 and TNKS2. Binding often leads to interactor ubiquitination, in the presence of the appropriate E1 and E2 enzymes, and proteasomal degradation. In terms of processing, ubiquitinated; autoubiquitinated. Autoubiquitination is enhanced upon poly(ADP-ribose)-binding.

Its subcellular location is the cytoplasm. It is found in the cytosol. The protein resides in the nucleus. The enzyme catalyses S-ubiquitinyl-[E2 ubiquitin-conjugating enzyme]-L-cysteine + [acceptor protein]-L-lysine = [E2 ubiquitin-conjugating enzyme]-L-cysteine + N(6)-ubiquitinyl-[acceptor protein]-L-lysine.. It participates in protein modification; protein ubiquitination. In terms of biological role, E3 ubiquitin-protein ligase that specifically binds poly-ADP-ribosylated (PARsylated) proteins and mediates their ubiquitination and subsequent degradation. May regulate many important biological processes, such as cell survival and DNA damage response. Acts as an activator of the Wnt signaling pathway by mediating the ubiquitination of PARsylated AXIN1 and AXIN2, 2 key components of the beta-catenin destruction complex. Acts in cooperation with tankyrase proteins (TNKS and TNKS2), which mediate PARsylation of target proteins AXIN1, AXIN2, BLZF1, CASC3, TNKS and TNKS2. Recognizes and binds tankyrase-dependent PARsylated proteins via its WWE domain and mediates their ubiquitination, leading to their degradation. Different ubiquitin linkage types have been observed: TNKS2 undergoes ubiquitination at 'Lys-48' and 'Lys-63', while AXIN1 is only ubiquitinated at 'Lys-48'. May regulate TNKS and TNKS2 subcellular location, preventing aggregation at a centrosomal location. Neuroprotective protein. Protects the brain against N-methyl-D-aspartate (NMDA) receptor-mediated glutamate excitotoxicity and ischemia, by interfering with PAR-induced cell death, called parthanatos. Prevents nuclear translocation of AIFM1 in a PAR-binding dependent manner. Does not affect PARP1 activation. Protects against cell death induced by DNA damaging agents, such as N-methyl-N-nitro-N-nitrosoguanidine (MNNG) and rescues cells from G1 arrest. Promotes cell survival after gamma-irradiation. Facilitates DNA repair. This chain is E3 ubiquitin-protein ligase RNF146 (Rnf146), found in Rattus norvegicus (Rat).